A 450-amino-acid chain; its full sequence is Probable glucoamylase (450 aa).

Residues M1 to A16 form the signal peptide. A propeptide spanning residues E17–E28 is cleaved from the precursor. W147 contacts substrate. The Proton acceptor role is filled by D203. E206 serves as the catalytic Proton donor. N-linked (GlcNAc...) asparagine glycosylation is found at N383 and N409.

The protein belongs to the glycosyl hydrolase 15 family.

The enzyme catalyses Hydrolysis of terminal (1-&gt;4)-linked alpha-D-glucose residues successively from non-reducing ends of the chains with release of beta-D-glucose.. In Schizosaccharomyces pombe (strain 972 / ATCC 24843) (Fission yeast), this protein is Probable glucoamylase (meu17).